A 347-amino-acid chain; its full sequence is NADH-ubiquinone oxidoreductase chain 2 (347 aa).

The next 11 helical transmembrane spans lie at Met-1–Met-21, His-25–Met-45, Phe-60–Phe-80, Met-96–Pro-116, Gly-127–Pro-147, Ile-149–Gly-169, Ile-178–Pro-198, Leu-202–Ala-222, Ile-239–Gly-259, Asn-274–Met-294, and Met-326–Leu-346.

Belongs to the complex I subunit 2 family. As to quaternary structure, core subunit of respiratory chain NADH dehydrogenase (Complex I) which is composed of 45 different subunits. Interacts with TMEM242.

The protein resides in the mitochondrion inner membrane. It carries out the reaction a ubiquinone + NADH + 5 H(+)(in) = a ubiquinol + NAD(+) + 4 H(+)(out). Core subunit of the mitochondrial membrane respiratory chain NADH dehydrogenase (Complex I) that is believed to belong to the minimal assembly required for catalysis. Complex I functions in the transfer of electrons from NADH to the respiratory chain. The immediate electron acceptor for the enzyme is believed to be ubiquinone. The polypeptide is NADH-ubiquinone oxidoreductase chain 2 (Suncus etruscus (Etruscan shrew)).